Consider the following 305-residue polypeptide: Tyrosine recombinase XerC (305 aa).

Residues 4-95 (TQIQELIIKW…AIKNFYKFLE (92 aa)) form the Core-binding (CB) domain. Residues 116-298 (LLPKALSEEE…SIKHLETAYV (183 aa)) form the Tyr recombinase domain. Catalysis depends on residues Arg-159, Lys-182, His-250, Arg-253, and His-276. The active-site O-(3'-phospho-DNA)-tyrosine intermediate is Tyr-285.

It belongs to the 'phage' integrase family. XerC subfamily. In terms of assembly, forms a cyclic heterotetrameric complex composed of two molecules of XerC and two molecules of XerD.

Its subcellular location is the cytoplasm. In terms of biological role, site-specific tyrosine recombinase, which acts by catalyzing the cutting and rejoining of the recombining DNA molecules. The XerC-XerD complex is essential to convert dimers of the bacterial chromosome into monomers to permit their segregation at cell division. It also contributes to the segregational stability of plasmids. This Rickettsia bellii (strain RML369-C) protein is Tyrosine recombinase XerC.